Here is a 31-residue protein sequence, read N- to C-terminus: Cyclotide mech-5 (31 aa).

A cross-link (cyclopeptide (Gly-Asp)) is located at residues 1-31; it reads GVIPCGESCVFIPCISSVVGCTCKNKVCYRD. Disulfide bonds link Cys-5-Cys-21, Cys-9-Cys-23, and Cys-14-Cys-28.

This is a cyclic peptide. In terms of processing, contains 3 disulfide bonds.

Probably participates in a plant defense mechanism (Potential). Binds to and induces leakage in phospholipd membranes, particularly ones containing 1-palmitoyl-2-oleophosphatidylethanolamine (POPE). This chain is Cyclotide mech-5, found in Melicytus chathamicus (Chatham Island mahoe).